The chain runs to 427 residues: Inorganic pyrophosphatase 1 (427 aa).

A compositionally biased stretch (low complexity) spans 36 to 52; the sequence is SSSSNTATTSTSSSNTS. Disordered stretches follow at residues 36 to 63 and 77 to 118; these read SSSS…TSRP and SMDS…RSLH. Composition is skewed to polar residues over residues 53–63 and 77–114; these read QKWATSRTSRP and SMDS…ANSE. Mg(2+) contacts are provided by aspartate 259, aspartate 264, and aspartate 296.

This sequence belongs to the PPase family. The cofactor is Mg(2+). In terms of tissue distribution, expressed in coelomocytes, the intestine and in the nervous system including the nerve cords and sensory neurons.

It is found in the cytoplasm. It catalyses the reaction diphosphate + H2O = 2 phosphate + H(+). Catalyzes the hydrolysis of inorganic pyrophosphate (PPi) forming two phosphate ions. Plays a role in intestinal development and subsequent normal secretory, digestive and absorption functions. Required for larval development. This chain is Inorganic pyrophosphatase 1, found in Caenorhabditis elegans.